The chain runs to 111 residues: Beta-microseminoprotein (111 aa).

Positions 1-20 (MKFLLGTLVVLATFVTLCNS) are cleaved as a signal peptide. Q21 is modified (pyrrolidone carboxylic acid). 5 disulfide bridges follow: C22–C67, C35–C59, C54–C90, C57–C66, and C81–C104.

It belongs to the beta-microseminoprotein family. As to quaternary structure, homodimer; Interacts with PI16. As to expression, corpora lutea, mostly in the luteal cells surrounding blood vessels.

Its subcellular location is the secreted. The protein is Beta-microseminoprotein (MSMB) of Sus scrofa (Pig).